The chain runs to 414 residues: Translation initiation factor 2 subunit gamma (414 aa).

The tr-type G domain occupies 7–204 (QPEVNIGLVG…ALQTEIATPD (198 aa)). The tract at residues 16 to 23 (GHVDHGKT) is G1. The Mg(2+) site is built by Asp19, Thr23, Gly44, and Ser46. 19-24 (DHGKTT) serves as a coordination point for GTP. The tract at residues 44–48 (GISIR) is G2. The tract at residues 91–94 (DAPG) is G3. Residues 147-150 (NKVD) and 182-184 (SAE) each bind GTP. The interval 147–150 (NKVD) is G4. The interval 182-184 (SAE) is G5.

Belongs to the TRAFAC class translation factor GTPase superfamily. Classic translation factor GTPase family. EIF2G subfamily. Heterotrimer composed of an alpha, a beta and a gamma chain. Requires Mg(2+) as cofactor.

It catalyses the reaction GTP + H2O = GDP + phosphate + H(+). Functionally, eIF-2 functions in the early steps of protein synthesis by forming a ternary complex with GTP and initiator tRNA. The protein is Translation initiation factor 2 subunit gamma of Halobacterium salinarum (strain ATCC 29341 / DSM 671 / R1).